The following is a 97-amino-acid chain: Nucleoid-associated protein HPAG1_0033 (97 aa).

The protein belongs to the YbaB/EbfC family. As to quaternary structure, homodimer.

Its subcellular location is the cytoplasm. The protein resides in the nucleoid. Its function is as follows. Binds to DNA and alters its conformation. May be involved in regulation of gene expression, nucleoid organization and DNA protection. The polypeptide is Nucleoid-associated protein HPAG1_0033 (Helicobacter pylori (strain HPAG1)).